The chain runs to 406 residues: Nicotinate phosphoribosyltransferase (406 aa).

His-227 carries the post-translational modification Phosphohistidine; by autocatalysis.

Belongs to the NAPRTase family. In terms of processing, transiently phosphorylated on a His residue during the reaction cycle. Phosphorylation strongly increases the affinity for substrates and increases the rate of nicotinate D-ribonucleotide production. Dephosphorylation regenerates the low-affinity form of the enzyme, leading to product release.

The catalysed reaction is nicotinate + 5-phospho-alpha-D-ribose 1-diphosphate + ATP + H2O = nicotinate beta-D-ribonucleotide + ADP + phosphate + diphosphate. The protein operates within cofactor biosynthesis; NAD(+) biosynthesis; nicotinate D-ribonucleotide from nicotinate: step 1/1. In terms of biological role, catalyzes the synthesis of beta-nicotinate D-ribonucleotide from nicotinate and 5-phospho-D-ribose 1-phosphate at the expense of ATP. This is Nicotinate phosphoribosyltransferase from Methanosarcina mazei (strain ATCC BAA-159 / DSM 3647 / Goe1 / Go1 / JCM 11833 / OCM 88) (Methanosarcina frisia).